We begin with the raw amino-acid sequence, 412 residues long: Aspartokinase (412 aa).

ACT domains follow at residues 266 to 340 (LTIR…GDTN) and 346 to 412 (IVGV…RQGE).

This sequence belongs to the aspartokinase family.

The catalysed reaction is L-aspartate + ATP = 4-phospho-L-aspartate + ADP. Its pathway is amino-acid biosynthesis; L-lysine biosynthesis via DAP pathway; (S)-tetrahydrodipicolinate from L-aspartate: step 1/4. The protein operates within amino-acid biosynthesis; L-methionine biosynthesis via de novo pathway; L-homoserine from L-aspartate: step 1/3. It participates in amino-acid biosynthesis; L-threonine biosynthesis; L-threonine from L-aspartate: step 1/5. This is Aspartokinase (lysC) from Pseudomonas aeruginosa (strain ATCC 15692 / DSM 22644 / CIP 104116 / JCM 14847 / LMG 12228 / 1C / PRS 101 / PAO1).